Consider the following 139-residue polypeptide: uncharacterized protein (139 aa).

The HIT domain maps to 5 to 114 (IFCKIINKEL…IPRFKNDGFG (110 aa)). Residues 99–103 (HTHFH) carry the Histidine triad motif motif.

This is an uncharacterized protein from Borreliella burgdorferi (strain ATCC 35210 / DSM 4680 / CIP 102532 / B31) (Borrelia burgdorferi).